Here is a 363-residue protein sequence, read N- to C-terminus: Phosphoserine aminotransferase (363 aa).

Arg42 is a binding site for L-glutamate. Pyridoxal 5'-phosphate is bound by residues 76–77 (AS), Trp101, Thr151, Asp170, and Gln193. N6-(pyridoxal phosphate)lysine is present on Lys194. 234-235 (NT) is a binding site for pyridoxal 5'-phosphate.

This sequence belongs to the class-V pyridoxal-phosphate-dependent aminotransferase family. SerC subfamily. Homodimer. The cofactor is pyridoxal 5'-phosphate.

The protein resides in the cytoplasm. The catalysed reaction is O-phospho-L-serine + 2-oxoglutarate = 3-phosphooxypyruvate + L-glutamate. It catalyses the reaction 4-(phosphooxy)-L-threonine + 2-oxoglutarate = (R)-3-hydroxy-2-oxo-4-phosphooxybutanoate + L-glutamate. The protein operates within amino-acid biosynthesis; L-serine biosynthesis; L-serine from 3-phospho-D-glycerate: step 2/3. Catalyzes the reversible conversion of 3-phosphohydroxypyruvate to phosphoserine and of 3-hydroxy-2-oxo-4-phosphonooxybutanoate to phosphohydroxythreonine. The chain is Phosphoserine aminotransferase from Listeria monocytogenes serotype 4b (strain F2365).